Here is a 647-residue protein sequence, read N- to C-terminus: DNA ligase (647 aa).

Residues 30-34 (DEEYD), 79-80 (SM), and Glu106 contribute to the NAD(+) site. Lys108 (N6-AMP-lysine intermediate) is an active-site residue. NAD(+)-binding residues include Arg129, Glu163, and Lys301. Cys395, Cys398, Cys411, and Cys416 together coordinate Zn(2+). The region spanning 569-647 (SISNALSGKT…SEYERLKLEV (79 aa)) is the BRCT domain.

It belongs to the NAD-dependent DNA ligase family. LigA subfamily. Requires Mg(2+) as cofactor. Mn(2+) is required as a cofactor.

It catalyses the reaction NAD(+) + (deoxyribonucleotide)n-3'-hydroxyl + 5'-phospho-(deoxyribonucleotide)m = (deoxyribonucleotide)n+m + AMP + beta-nicotinamide D-nucleotide.. Its function is as follows. DNA ligase that catalyzes the formation of phosphodiester linkages between 5'-phosphoryl and 3'-hydroxyl groups in double-stranded DNA using NAD as a coenzyme and as the energy source for the reaction. It is essential for DNA replication and repair of damaged DNA. The sequence is that of DNA ligase from Campylobacter concisus (strain 13826).